A 455-amino-acid chain; its full sequence is tRNA modification GTPase MnmE (455 aa).

Residues Arg24, Glu81, and Lys120 each coordinate (6S)-5-formyl-5,6,7,8-tetrahydrofolate. The region spanning 216 to 378 (GMTVVIAGRP…LREHLKACMG (163 aa)) is the TrmE-type G domain. Asn226 contributes to the K(+) binding site. GTP is bound by residues 226–231 (NAGKSS), 245–251 (TDIAGTT), 270–273 (DTAG), 335–338 (NKAD), and 359–361 (SAR). Mg(2+) is bound at residue Ser230. K(+) is bound by residues Thr245, Ile247, and Thr250. Thr251 contacts Mg(2+). Lys455 is a binding site for (6S)-5-formyl-5,6,7,8-tetrahydrofolate.

It belongs to the TRAFAC class TrmE-Era-EngA-EngB-Septin-like GTPase superfamily. TrmE GTPase family. As to quaternary structure, homodimer. Heterotetramer of two MnmE and two MnmG subunits. The cofactor is K(+).

It is found in the cytoplasm. Exhibits a very high intrinsic GTPase hydrolysis rate. Involved in the addition of a carboxymethylaminomethyl (cmnm) group at the wobble position (U34) of certain tRNAs, forming tRNA-cmnm(5)s(2)U34. In Pseudomonas paraeruginosa (strain DSM 24068 / PA7) (Pseudomonas aeruginosa (strain PA7)), this protein is tRNA modification GTPase MnmE.